Reading from the N-terminus, the 153-residue chain is Large ribosomal subunit protein uL13 (153 aa).

The protein belongs to the universal ribosomal protein uL13 family. As to quaternary structure, part of the 50S ribosomal subunit.

In terms of biological role, this protein is one of the early assembly proteins of the 50S ribosomal subunit, although it is not seen to bind rRNA by itself. It is important during the early stages of 50S assembly. The sequence is that of Large ribosomal subunit protein uL13 from Methylobacterium nodulans (strain LMG 21967 / CNCM I-2342 / ORS 2060).